A 194-amino-acid chain; its full sequence is 7-methyl-GTP pyrophosphatase (194 aa).

The active-site Proton acceptor is aspartate 69.

The protein belongs to the Maf family. YceF subfamily. A divalent metal cation serves as cofactor.

The protein localises to the cytoplasm. It carries out the reaction N(7)-methyl-GTP + H2O = N(7)-methyl-GMP + diphosphate + H(+). Functionally, nucleoside triphosphate pyrophosphatase that hydrolyzes 7-methyl-GTP (m(7)GTP). May have a dual role in cell division arrest and in preventing the incorporation of modified nucleotides into cellular nucleic acids. The sequence is that of 7-methyl-GTP pyrophosphatase (yceF1) from Salmonella choleraesuis (strain SC-B67).